Here is a 186-residue protein sequence, read N- to C-terminus: Potassium-transporting ATPase KdpC subunit (186 aa).

A helical membrane pass occupies residues 10–30; that stretch reads LTIITMVLCGFLFPLAITLIG.

It belongs to the KdpC family. The system is composed of three essential subunits: KdpA, KdpB and KdpC.

The protein localises to the cell membrane. Functionally, part of the high-affinity ATP-driven potassium transport (or Kdp) system, which catalyzes the hydrolysis of ATP coupled with the electrogenic transport of potassium into the cytoplasm. This subunit acts as a catalytic chaperone that increases the ATP-binding affinity of the ATP-hydrolyzing subunit KdpB by the formation of a transient KdpB/KdpC/ATP ternary complex. This is Potassium-transporting ATPase KdpC subunit from Staphylococcus aureus (strain bovine RF122 / ET3-1).